The following is an 892-amino-acid chain: Smad protein daf-3 (892 aa).

2 disordered regions span residues 1-43 (MGDH…GLED) and 135-161 (PYLD…FDTK). Over residues 15–26 (IPPQFNYSQPGT) the composition is skewed to polar residues. An MH1 domain is found at 198 to 347 (KIVEYLMYYR…YEIVIGTMIV (150 aa)). The tract at residues 505-552 (YPDFHHPFNQQPHQPPQLSQNHTSQQGSHQPGHQGQVPNDPPISRPVL) is disordered. A compositionally biased stretch (low complexity) spans 528–540 (SQQGSHQPGHQGQ). Positions 657-880 (WGTIVYYEKN…TNCFEPLGME (224 aa)) constitute an MH2 domain.

This sequence belongs to the dwarfin/SMAD family. In terms of assembly, interacts with R-SMADs daf-8 and daf-14. Interacts with daf-14 in a daf-8 dependent manner. May interact with daf-5.

It is found in the cytoplasm. The protein localises to the nucleus. The protein resides in the chromosome. In terms of biological role, transcriptional regulator and common SMAD (co-SMAD), required to regulate entry into a developmentally arrested larval state known as dauer, in response to harsh environmental conditions. Probable component of transcriptional regulatory complex with SMAD protein daf-5. Acts antagonistically to SMAD signaling downstream of TGF-beta-like daf-7 signaling. Binds to the 5'-GTCTG-3' motif found in regulatory regions and may modulate the expression of genes involved in TGF-beta-like daf-7 and Notch lag-2 signaling. May regulate gene expression outside the dauer pathway. This chain is Smad protein daf-3, found in Caenorhabditis elegans.